The primary structure comprises 181 residues: Alkyl hydroperoxide reductase AhpD (181 aa).

The active-site Proton donor is the Cys-131. A disulfide bridge connects residues Cys-131 and Cys-134. Cys-134 (cysteine sulfenic acid (-SOH) intermediate) is an active-site residue.

The protein belongs to the AhpD family.

The catalysed reaction is N(6)-[(R)-dihydrolipoyl]-L-lysyl-[lipoyl-carrier protein] + a hydroperoxide = N(6)-[(R)-lipoyl]-L-lysyl-[lipoyl-carrier protein] + an alcohol + H2O. Functionally, antioxidant protein with alkyl hydroperoxidase activity. Required for the reduction of the AhpC active site cysteine residues and for the regeneration of the AhpC enzyme activity. The sequence is that of Alkyl hydroperoxide reductase AhpD from Bradyrhizobium sp. (strain ORS 278).